We begin with the raw amino-acid sequence, 555 residues long: O-fucosyltransferase 20 (555 aa).

Residues 1-58 lie on the Cytoplasmic side of the membrane; that stretch reads MALPKNGGNSSSTKKKVSYISVPSQIINSLSSSSLQSLLVSPKKSSRCTNRFSYRNPR. A helical; Signal-anchor for type II membrane protein transmembrane segment spans residues 59-79; that stretch reads IWFLTLFLVSLFGMLKLGLNV. Topologically, residues 80 to 555 are lumenal; it reads DPISLPFSRY…MCSDRRQQQQ (476 aa). The tract at residues 110–130 is disordered; sequence KNDTQSSSSSEHRKNETLPTE. N-linked (GlcNAc...) asparagine glycosylation is found at Asn-111 and Asn-124. 330–332 serves as a coordination point for substrate; the sequence is HLR. N-linked (GlcNAc...) asparagine glycans are attached at residues Asn-371 and Asn-503. The interval 525 to 555 is disordered; the sequence is QPELRTGRGGKDVTKHPVSECMCSDRRQQQQ. The span at 529–555 shows a compositional bias: basic and acidic residues; that stretch reads RTGRGGKDVTKHPVSECMCSDRRQQQQ.

The protein belongs to the glycosyltransferase GT106 family. As to expression, highly expressed in embryogenic microspore and in vegetative tissues.

It localises to the golgi apparatus membrane. Its pathway is glycan metabolism. May play a role in the biosynthesis of matrix polysaccharides and contribute to the biomechanics and development of the plant cell wall. The sequence is that of O-fucosyltransferase 20 from Brassica napus (Rape).